We begin with the raw amino-acid sequence, 684 residues long: Phenoloxidase 1 (684 aa).

The propeptide at 1-50 (MSDKNKLLLLFDRPLETVIVPRGPDQEAFDVPVDLLSDRYKAIGVQVSNR) is removed by PPAF1. Asn-80 is a glycosylation site (N-linked (GlcNAc...) asparagine). Cu cation contacts are provided by His-208, His-212, and His-237. Glu-349 serves as the catalytic Proton acceptor. N-linked (GlcNAc...) asparagine glycosylation is found at Asn-352 and Asn-356. His-364, His-368, and His-404 together coordinate Cu cation. Asn-486, Asn-491, and Asn-545 each carry an N-linked (GlcNAc...) asparagine glycan. Disulfide bonds link Cys-579–Cys-621 and Cys-581–Cys-628.

The protein belongs to the tyrosinase family. Dimer. Might form a homodimer or a heterodimer with PPO1. Might interact with PPAF2 (via CLIP domain); the interaction might be required for PPO1 activity. It depends on Cu(2+) as a cofactor. Post-translationally, propeptide cleaved by PPAF1. As to expression, hemocytes.

Its subcellular location is the secreted. Its function is as follows. This is a copper-containing oxidase that functions in the formation of pigments such as melanins and other polyphenolic compounds. Catalyzes the oxidation of o-diphenols (N-acetyldopamine, 4-methylcatechol and dopamine). Cannot oxidize monophenols and p-phenols (L-tyrosine, tyramine, gentisic acid and hydroquinone). Binds to the surface of hemocytes and is involved in hemocyte melanization. Activation of the enzyme in response to bacterial lipopolysaccharides (LPS) suggests it may play a role in innate immunity. The sequence is that of Phenoloxidase 1 from Holotrichia diomphalia (Korean black chafer).